We begin with the raw amino-acid sequence, 490 residues long: Lysine--tRNA ligase (490 aa).

Mg(2+) contacts are provided by Glu398 and Glu405.

The protein belongs to the class-II aminoacyl-tRNA synthetase family. Homodimer. The cofactor is Mg(2+).

The protein resides in the cytoplasm. It catalyses the reaction tRNA(Lys) + L-lysine + ATP = L-lysyl-tRNA(Lys) + AMP + diphosphate. The chain is Lysine--tRNA ligase from Metamycoplasma arthritidis (strain 158L3-1) (Mycoplasma arthritidis).